The following is a 121-amino-acid chain: Large ribosomal subunit protein bL21 (121 aa).

This sequence belongs to the bacterial ribosomal protein bL21 family. As to quaternary structure, part of the 50S ribosomal subunit. Contacts protein L20.

In terms of biological role, this protein binds to 23S rRNA in the presence of protein L20. The protein is Large ribosomal subunit protein bL21 of Gloeobacter violaceus (strain ATCC 29082 / PCC 7421).